The sequence spans 365 residues: Alanine racemase (365 aa).

Lysine 32 serves as the catalytic Proton acceptor; specific for D-alanine. An N6-(pyridoxal phosphate)lysine modification is found at lysine 32. Arginine 128 contributes to the substrate binding site. Residue tyrosine 257 is the Proton acceptor; specific for L-alanine of the active site. Methionine 305 lines the substrate pocket.

The protein belongs to the alanine racemase family. The cofactor is pyridoxal 5'-phosphate.

It carries out the reaction L-alanine = D-alanine. It functions in the pathway amino-acid biosynthesis; D-alanine biosynthesis; D-alanine from L-alanine: step 1/1. Catalyzes the interconversion of L-alanine and D-alanine. May also act on other amino acids. This is Alanine racemase (alr) from Francisella tularensis subsp. tularensis (strain SCHU S4 / Schu 4).